We begin with the raw amino-acid sequence, 137 residues long: MGMYLLHIGNAAVTFNGPTPCPRSPYASTHVNVSWESASGIATLWANGKLVGRKGVWKGYSVGEEAKIILGQEQDSFGGHFDENQSFVGVIWDVFLWDHVLPPKEMCDSCYSGSLLNRHTLTYEDNGYVVTKPKVWA.

One can recognise a Pentraxin (PTX) domain in the interval methionine 1 to alanine 137. Glutamate 73, aspartate 75, and glutamine 85 together coordinate Ca(2+).

It belongs to the pentraxin family. As to expression, not expressed in the intestinal tract including ascending colon, descending colon and rectum. Not expressed in the human colon cancer cell lines HT-29 and CaCo-2.

The protein is Putative mucosal pentraxin homolog (MPTX1) of Homo sapiens (Human).